The chain runs to 82 residues: Cytochrome b559 subunit alpha (82 aa).

Residues V22–F36 traverse the membrane as a helical segment. H24 contacts heme.

The protein belongs to the PsbE/PsbF family. Heterodimer of an alpha subunit and a beta subunit. PSII is composed of 1 copy each of membrane proteins PsbA, PsbB, PsbC, PsbD, PsbE, PsbF, PsbH, PsbI, PsbJ, PsbK, PsbL, PsbM, PsbT, PsbX, PsbY, PsbZ, Psb30/Ycf12, peripheral proteins PsbO, CyanoQ (PsbQ), PsbU, PsbV and a large number of cofactors. It forms dimeric complexes. Heme b serves as cofactor.

The protein resides in the cellular thylakoid membrane. In terms of biological role, this b-type cytochrome is tightly associated with the reaction center of photosystem II (PSII). PSII is a light-driven water:plastoquinone oxidoreductase that uses light energy to abstract electrons from H(2)O, generating O(2) and a proton gradient subsequently used for ATP formation. It consists of a core antenna complex that captures photons, and an electron transfer chain that converts photonic excitation into a charge separation. In Synechococcus sp. (strain WH7803), this protein is Cytochrome b559 subunit alpha.